Reading from the N-terminus, the 189-residue chain is Elongation factor P (189 aa).

Belongs to the elongation factor P family.

The protein resides in the cytoplasm. The protein operates within protein biosynthesis; polypeptide chain elongation. Its function is as follows. Involved in peptide bond synthesis. Stimulates efficient translation and peptide-bond synthesis on native or reconstituted 70S ribosomes in vitro. Probably functions indirectly by altering the affinity of the ribosome for aminoacyl-tRNA, thus increasing their reactivity as acceptors for peptidyl transferase. In Pseudomonas syringae pv. syringae (strain B728a), this protein is Elongation factor P.